A 212-amino-acid polypeptide reads, in one-letter code: Molybdenum cofactor guanylyltransferase (212 aa).

GTP is bound by residues 14–16 (LAG), K27, N55, D73, and D108. D108 provides a ligand contact to Mg(2+).

Belongs to the MobA family. In terms of assembly, monomer. It depends on Mg(2+) as a cofactor.

The protein resides in the cytoplasm. The catalysed reaction is Mo-molybdopterin + GTP + H(+) = Mo-molybdopterin guanine dinucleotide + diphosphate. Functionally, transfers a GMP moiety from GTP to Mo-molybdopterin (Mo-MPT) cofactor (Moco or molybdenum cofactor) to form Mo-molybdopterin guanine dinucleotide (Mo-MGD) cofactor. The sequence is that of Molybdenum cofactor guanylyltransferase from Bradyrhizobium sp. (strain ORS 278).